The following is a 90-amino-acid chain: Putative membrane protein insertion efficiency factor (90 aa).

The protein belongs to the UPF0161 family.

It localises to the cell membrane. Could be involved in insertion of integral membrane proteins into the membrane. The chain is Putative membrane protein insertion efficiency factor from Oceanobacillus iheyensis (strain DSM 14371 / CIP 107618 / JCM 11309 / KCTC 3954 / HTE831).